Reading from the N-terminus, the 130-residue chain is Protein CPn_0713/CP_0033/CPj0713/CpB0740 (130 aa).

Belongs to the chlamydial CPn_0713/CT_663/TC_0034 family.

This is Protein CPn_0713/CP_0033/CPj0713/CpB0740 from Chlamydia pneumoniae (Chlamydophila pneumoniae).